We begin with the raw amino-acid sequence, 224 residues long: uncharacterized protein (224 aa).

This is an uncharacterized protein from Saccharomyces cerevisiae (strain ATCC 204508 / S288c) (Baker's yeast).